The chain runs to 114 residues: Prostate stem cell antigen (114 aa).

Positions 1 to 11 are cleaved as a signal peptide; the sequence is MAGLALQPGTA. A UPAR/Ly6 domain is found at 12–86; sequence LLCYSCKAQV…CCDTDLCNAS (75 aa). 5 disulfides stabilise this stretch: Cys14/Cys39, Cys17/Cys26, Cys32/Cys57, Cys61/Cys77, and Cys78/Cys83. Residue Asn31 is glycosylated (N-linked (GlcNAc...) asparagine). Ser86 carries the GPI-anchor amidated serine lipid modification. The propeptide at 86 to 114 is removed in mature form; that stretch reads SGAHALQPAAAILALLPALGLLLWGPGQL.

Interacts with CHRNA4. In terms of processing, N-glycosylated. As to expression, highly expressed in prostate (basal, secretory and neuroendocrine epithelium cells). Also found in bladder (transitional epithelium), placenta (trophoblasts), stomach (neuroendocrine cells), colon (neuroendocrine cells) and kidney (collecting ducts). Overexpressed in prostate cancers and expression is correlated with tumor stage, grade and androgen-independence. Highly expressed in prostate cancer bone metastases. Expressed in gastric epithelial cells, mainly in the isthmus (at protein level). Not detected in normal intestinal epithelium (at protein level). Expressed in brain cortex; expression is significantly increased in the front cortex of Alzheimer disease patients.

It localises to the cell membrane. May be involved in the regulation of cell proliferation. Has a cell-proliferation inhibition activity in vitro. In terms of biological role, may act as a modulator of nicotinic acetylcholine receptors (nAChRs) activity. In vitro inhibits nicotine-induced signaling probably implicating alpha-3:beta-2- or alpha-7-containing nAChRs. This chain is Prostate stem cell antigen (PSCA), found in Homo sapiens (Human).